The chain runs to 151 residues: Ribosome maturation factor RimP (151 aa).

This sequence belongs to the RimP family.

Its subcellular location is the cytoplasm. Functionally, required for maturation of 30S ribosomal subunits. In Nitrosococcus oceani (strain ATCC 19707 / BCRC 17464 / JCM 30415 / NCIMB 11848 / C-107), this protein is Ribosome maturation factor RimP.